A 153-amino-acid polypeptide reads, in one-letter code: NAD(P)H-quinone oxidoreductase subunit N (153 aa).

It belongs to the complex I NdhN subunit family. As to quaternary structure, NDH-1 can be composed of about 15 different subunits; different subcomplexes with different compositions have been identified which probably have different functions.

The protein resides in the cellular thylakoid membrane. The catalysed reaction is a plastoquinone + NADH + (n+1) H(+)(in) = a plastoquinol + NAD(+) + n H(+)(out). It catalyses the reaction a plastoquinone + NADPH + (n+1) H(+)(in) = a plastoquinol + NADP(+) + n H(+)(out). Its function is as follows. NDH-1 shuttles electrons from an unknown electron donor, via FMN and iron-sulfur (Fe-S) centers, to quinones in the respiratory and/or the photosynthetic chain. The immediate electron acceptor for the enzyme in this species is believed to be plastoquinone. Couples the redox reaction to proton translocation, and thus conserves the redox energy in a proton gradient. Cyanobacterial NDH-1 also plays a role in inorganic carbon-concentration. This chain is NAD(P)H-quinone oxidoreductase subunit N, found in Synechococcus sp. (strain WH7803).